A 357-amino-acid polypeptide reads, in one-letter code: Glucose-6-phosphatase catalytic subunit 1 (357 aa).

At 1–28 (MEKGMNVLHDFGIQSTHYLQVNYQNSQD) the chain is on the lumenal side. A helical membrane pass occupies residues 29-49 (WFILVSVIADLRNAFYVLFPI). The Cytoplasmic portion of the chain corresponds to 50 to 60 (WFHLREAVGIK). Residues 61–81 (LLWVAVIGDWLNLVFKWILFG) traverse the membrane as a helical segment. At 82 to 117 (QRPYWWVLDTDYYSNTSAPLIKQFPVTCETGPGSPS) the chain is on the lumenal side. R83 contributes to the substrate binding site. Residue N96 is glycosylated (N-linked (GlcNAc...) asparagine). The chain crosses the membrane as a helical span at residues 118 to 138 (GHAMGTAGVYYVMVTSTLSIF). H119 acts as the Proton donor in catalysis. Residues 139 to 147 (RGKKKPTYR) are Cytoplasmic-facing. Residues 148–168 (FRCLNVMLWLGFWVVQLNVCL) traverse the membrane as a helical segment. The Lumenal segment spans residues 169–170 (SR). Residue R170 coordinates substrate. The chain crosses the membrane as a helical span at residues 171 to 191 (IYLAAHFPHQVVAGVLSGIAV). The active-site Nucleophile is the H176. At 192-209 (AETFRHIQSIYNASLKKY) the chain is on the cytoplasmic side. A helical transmembrane segment spans residues 210-230 (FLITCFLFSFAIGFYLLLKWL). Residues 231–254 (GVDLLWTLEKAKRRCERPEWVHID) lie on the Lumenal side of the membrane. The chain crosses the membrane as a helical span at residues 255–275 (TTPFASLLKNLGTLFGLGLAL). The Cytoplasmic segment spans residues 276-291 (NSSMYRESCKGKLSKW). The chain crosses the membrane as a helical span at residues 292–312 (FPFRLSCIVASLVLLHLFDSL). Topologically, residues 313–320 (KPPSQIEL) are lumenal. Residues 321-341 (IFYVLSFCKSAAVPLASVSLI) traverse the membrane as a helical segment. Over 342–357 (PYCLAWVLGQPNKKTV) the chain is Cytoplasmic. Positions 354-357 (KKTV) match the Prevents secretion from ER motif.

It belongs to the glucose-6-phosphatase family.

Its subcellular location is the endoplasmic reticulum membrane. The enzyme catalyses D-glucose 6-phosphate + H2O = D-glucose + phosphate. Its pathway is carbohydrate biosynthesis; gluconeogenesis. Hydrolyzes glucose-6-phosphate to glucose in the endoplasmic reticulum. Forms with the glucose-6-phosphate transporter (SLC37A4/G6PT) the complex responsible for glucose production in the terminal step of glycogenolysis and gluconeogenesis. Hence, it is the key enzyme in homeostatic regulation of blood glucose levels. The sequence is that of Glucose-6-phosphatase catalytic subunit 1 (G6PC1) from Bos taurus (Bovine).